The primary structure comprises 630 residues: Sorting nexin-4 (630 aa).

Polar residues-rich tracts occupy residues 1–11 and 19–28; these read MSSEDQFTSIQ and NTNNTPTDTT. The segment at 1–143 is disordered; the sequence is MSSEDQFTSI…QQPQQQLASI (143 aa). Basic residues predominate over residues 32-49; the sequence is KSSKSKKSKKSSSKKKNG. Residues 50–60 are compositionally biased toward low complexity; sequence NKISPSSTTET. Over residues 81 to 94 the composition is skewed to basic and acidic residues; the sequence is DDNHEVDDGNKEQN. The segment covering 130–143 has biased composition (low complexity); that stretch reads QQQLQQPQQQLASI. The PX domain maps to 187–321; the sequence is SIKTTVTHPN…HLFISNSNDW (135 aa). The a 1,2-diacyl-sn-glycero-3-phospho-(1D-myo-inositol-3-phosphate) site is built by Arg-243, Lys-269, and Arg-288. 2 coiled-coil regions span residues 361 to 413 and 550 to 581; these read SKHK…SNQI and TIKS…INEE.

This sequence belongs to the sorting nexin family.

It is found in the cytoplasm. The protein localises to the cytosol. Its subcellular location is the preautophagosomal structure membrane. The protein resides in the endosome membrane. Functionally, sorting nexin, involved in the separation or division of vacuoles throughout the entire life cycle of the cells. Involved in retrieval of late-Golgi SNAREs from post-Golgi endosomes to the trans-Golgi network, for cytoplasm to vacuole transport (Cvt), and autophagy of large cargos including mitophagy, pexophagy and glycophagy. The protein is Sorting nexin-4 (SNX4) of Candida albicans (strain SC5314 / ATCC MYA-2876) (Yeast).